The sequence spans 74 residues: UPF0154 protein LSL_0542 (74 aa).

The chain crosses the membrane as a helical span at residues I5–A25.

It belongs to the UPF0154 family.

The protein localises to the cell membrane. The polypeptide is UPF0154 protein LSL_0542 (Ligilactobacillus salivarius (strain UCC118) (Lactobacillus salivarius)).